Consider the following 204-residue polypeptide: N-(5'-phosphoribosyl)anthranilate isomerase (204 aa).

Belongs to the TrpF family.

The enzyme catalyses N-(5-phospho-beta-D-ribosyl)anthranilate = 1-(2-carboxyphenylamino)-1-deoxy-D-ribulose 5-phosphate. Its pathway is amino-acid biosynthesis; L-tryptophan biosynthesis; L-tryptophan from chorismate: step 3/5. This is N-(5'-phosphoribosyl)anthranilate isomerase from Bacillus mycoides (strain KBAB4) (Bacillus weihenstephanensis).